The sequence spans 206 residues: Guanylate kinase (206 aa).

In terms of domain architecture, Guanylate kinase-like spans 5–183; that stretch reads FNLLILSGPS…SKEIILSIAK (179 aa). ATP is bound at residue 12–19; that stretch reads GPSGAGKS.

This sequence belongs to the guanylate kinase family.

Its subcellular location is the cytoplasm. It carries out the reaction GMP + ATP = GDP + ADP. Its function is as follows. Essential for recycling GMP and indirectly, cGMP. This is Guanylate kinase (gmk) from Helicobacter pylori (strain J99 / ATCC 700824) (Campylobacter pylori J99).